Here is a 563-residue protein sequence, read N- to C-terminus: Probable CoA ligase CCL11 (563 aa).

Residues 195–203 (TSGTTSSPK), 328–333 (HGYGMT), D426, 438–441 (IKDR), and K534 each bind ATP. The interval 263–328 (DGEIIFNLIR…TESLGFVISH (66 aa)) is SBD1. The interval 329-405 (GYGMTEMLGV…LKGSSIMLGY (77 aa)) is SBD2.

Belongs to the ATP-dependent AMP-binding enzyme family.

The protein resides in the cytoplasm. Its subcellular location is the cytosol. The polypeptide is Probable CoA ligase CCL11 (Humulus lupulus (European hop)).